The chain runs to 151 residues: uncharacterized protein (151 aa).

One can recognise an N-acetyltransferase domain in the interval 3–151; that stretch reads IKIDDLTGRQ…PNSVFMTKKL (149 aa).

The protein belongs to the acetyltransferase family.

This is an uncharacterized protein from Bacillus subtilis (strain 168).